A 24-amino-acid chain; its full sequence is Brevinin-1 (24 aa).

Cysteines 18 and 24 form a disulfide.

This sequence belongs to the frog skin active peptide (FSAP) family. Brevinin subfamily. In terms of tissue distribution, expressed by the skin glands.

The protein resides in the secreted. Functionally, shows antibacterial activity against representative Gram-negative and Gram-positive bacterial species, and a very high hemolytic activity. The polypeptide is Brevinin-1 (Pelophylax porosus brevipodus (Nagoya Daruma pond frog)).